The chain runs to 161 residues: Anthrone oxygenase tpcL (161 aa).

N-linked (GlcNAc...) asparagine glycosylation is present at asparagine 4. The next 4 membrane-spanning stretches (helical) occupy residues 15 to 35 (VITG…DIPV), 56 to 74 (IGHK…LYGY), 87 to 107 (LPHI…WLVM), and 136 to 155 (WAQL…VLGL).

The protein belongs to the anthrone oxygenase family. Specifically expressed in conidia.

The protein resides in the membrane. The catalysed reaction is emodin anthrone + O2 = emodin + H2O + H(+). The protein operates within secondary metabolite biosynthesis. Its function is as follows. Anthrone oxygenase; part of the gene cluster that mediates the biosynthesis of trypacidin, a mycotoxin with antiprotozoal activity and that plays a role in the infection process. The pathway begins with the synthesis of atrochrysone thioester by the polyketide synthase (PKS) tpcC. The atrochrysone carboxyl ACP thioesterase tpcB then breaks the thioester bond and releases the atrochrysone carboxylic acid from tpcC. The decarboxylase tpcK converts atrochrysone carboxylic acid to atrochrysone which is further reduced into emodin anthrone. The next step is performed by the emodin anthrone oxygenase tpcL that catalyzes the oxidation of emodinanthrone to emodin. Emodin O-methyltransferase encoded by tpcA catalyzes methylation of the 8-hydroxy group of emodin to form questin. Ring cleavage of questin by questin oxidase tpcI leads to desmethylsulochrin via several intermediates including questin epoxide. Another methylation step catalyzed by tpcM leads to the formation of sulochrin which is further converted to monomethylsulfochrin by tpcH. Finally, the tpcJ catalyzes the conversion of monomethylsulfochrin to trypacidin. Trypacidin is toxic for human pulmonary and bronchial epithelial cells by initiating the intracellular formation of nitric oxide (NO) and hydrogen peroxide (H(2)O(2)), thus triggering host necrotic cell death. The trypacidin pathway is also able to produce endocrocin via a distinct route from the endocrocin Enc pathway. In Aspergillus fumigatus (strain ATCC MYA-4609 / CBS 101355 / FGSC A1100 / Af293) (Neosartorya fumigata), this protein is Anthrone oxygenase tpcL.